The primary structure comprises 184 residues: Elongation factor P (184 aa).

This sequence belongs to the elongation factor P family.

The protein resides in the cytoplasm. The protein operates within protein biosynthesis; polypeptide chain elongation. Functionally, involved in peptide bond synthesis. Stimulates efficient translation and peptide-bond synthesis on native or reconstituted 70S ribosomes in vitro. Probably functions indirectly by altering the affinity of the ribosome for aminoacyl-tRNA, thus increasing their reactivity as acceptors for peptidyl transferase. In Mycoplasma mycoides subsp. mycoides SC (strain CCUG 32753 / NCTC 10114 / PG1), this protein is Elongation factor P.